Here is a 289-residue protein sequence, read N- to C-terminus: Ribosomal RNA small subunit methyltransferase I (289 aa).

This sequence belongs to the methyltransferase superfamily. RsmI family.

It localises to the cytoplasm. It catalyses the reaction cytidine(1402) in 16S rRNA + S-adenosyl-L-methionine = 2'-O-methylcytidine(1402) in 16S rRNA + S-adenosyl-L-homocysteine + H(+). In terms of biological role, catalyzes the 2'-O-methylation of the ribose of cytidine 1402 (C1402) in 16S rRNA. The chain is Ribosomal RNA small subunit methyltransferase I from Halalkalibacterium halodurans (strain ATCC BAA-125 / DSM 18197 / FERM 7344 / JCM 9153 / C-125) (Bacillus halodurans).